The chain runs to 421 residues: Histidine--tRNA ligase (421 aa).

Belongs to the class-II aminoacyl-tRNA synthetase family. Homodimer.

It is found in the cytoplasm. The enzyme catalyses tRNA(His) + L-histidine + ATP = L-histidyl-tRNA(His) + AMP + diphosphate + H(+). This chain is Histidine--tRNA ligase, found in Caldicellulosiruptor bescii (strain ATCC BAA-1888 / DSM 6725 / KCTC 15123 / Z-1320) (Anaerocellum thermophilum).